The chain runs to 441 residues: Squalene synthase (441 aa).

Helical transmembrane passes span 293 to 313 and 420 to 440; these read SFQF…LVFG and FKFN…YWYA.

This sequence belongs to the phytoene/squalene synthase family. Requires Mg(2+) as cofactor.

Its subcellular location is the endoplasmic reticulum membrane. It carries out the reaction 2 (2E,6E)-farnesyl diphosphate + NADPH + H(+) = squalene + 2 diphosphate + NADP(+). The catalysed reaction is 2 (2E,6E)-farnesyl diphosphate + NADH + H(+) = squalene + 2 diphosphate + NAD(+). The protein operates within terpene metabolism; lanosterol biosynthesis; lanosterol from farnesyl diphosphate: step 1/3. Functionally, catalyzes the condensation of 2 two farnesyl pyrophosphate moieties to form squalene. It is the first committed enzyme of the sterol biosynthesis pathway. Required for the biosynthesis of ergosterol. In Eremothecium gossypii (strain ATCC 10895 / CBS 109.51 / FGSC 9923 / NRRL Y-1056) (Yeast), this protein is Squalene synthase (ERG9).